The following is a 464-amino-acid chain: Kynureninase (464 aa).

N-acetylmethionine is present on methionine 1. Pyridoxal 5'-phosphate is bound by residues leucine 137, threonine 138, 165-168 (FPSD), serine 221, aspartate 250, histidine 253, and tyrosine 275. Lysine 276 carries the post-translational modification N6-(pyridoxal phosphate)lysine. Pyridoxal 5'-phosphate is bound by residues tryptophan 305 and asparagine 333.

Belongs to the kynureninase family. Homodimer. It depends on pyridoxal 5'-phosphate as a cofactor. High levels in liver and kidney. Also detected in heart, retina, ovary. Lung, testis and brain.

The protein localises to the cytoplasm. Its subcellular location is the cytosol. It catalyses the reaction L-kynurenine + H2O = anthranilate + L-alanine + H(+). The enzyme catalyses 3-hydroxy-L-kynurenine + H2O = 3-hydroxyanthranilate + L-alanine + H(+). Its pathway is amino-acid degradation; L-kynurenine degradation; L-alanine and anthranilate from L-kynurenine: step 1/1. The protein operates within cofactor biosynthesis; NAD(+) biosynthesis; quinolinate from L-kynurenine: step 2/3. Inhibited by o-methylbenzoylalanine (OMBA). Catalyzes the cleavage of L-kynurenine (L-Kyn) and L-3-hydroxykynurenine (L-3OHKyn) into anthranilic acid (AA) and 3-hydroxyanthranilic acid (3-OHAA), respectively. Has a preference for the L-3-hydroxy form. Also has cysteine-conjugate-beta-lyase activity. This is Kynureninase (Kynu) from Rattus norvegicus (Rat).